The sequence spans 197 residues: Putative sulfur carrier protein aq_1421 (197 aa).

Residue cysteine 17 is the Cysteine persulfide intermediate of the active site.

Belongs to the sulfur carrier protein TusA family.

This chain is Putative sulfur carrier protein aq_1421, found in Aquifex aeolicus (strain VF5).